A 1472-amino-acid chain; its full sequence is Adhesion G protein-coupled receptor L1 (1472 aa).

Positions 1-24 are cleaved as a signal peptide; sequence MARLAAVLWSLCVTAILVTSATQG. The Extracellular segment spans residues 25–857; sequence LSRAGLPFGL…EIYQGRINEL (833 aa). The 90-residue stretch at 40-129 folds into the SUEL-type lectin domain; that stretch reads ACEGYPIELR…KYLEVQYDCV (90 aa). Disulfide bonds link C41–C71, C50–C128, C83–C115, C96–C102, and C140–C322. E42 is a binding site for alpha-L-rhamnose. N98 carries N-linked (GlcNAc...) asparagine glycosylation. Alpha-L-rhamnose is bound at residue 117–120; the sequence is GTYK. Residues 139–398 enclose the Olfactomedin-like domain; the sequence is VCPGTLQKVL…VVRYSLEFGP (260 aa). The disordered stretch occupies residues 400-468; that stretch reads DPSAGPATSP…APAPSTRRPP (69 aa). Low complexity predominate over residues 405–441; sequence PATSPPLSTTTTARPTPLTSTASPAATTPLRRAPLTT. Over residues 453–468 the composition is skewed to pro residues; the sequence is DLPPATAPAPSTRRPP. 2 cysteine pairs are disulfide-bonded: C480–C515 and C503–C532. Residues N531, N640, N741, N800, N805, and N826 are each glycosylated (N-linked (GlcNAc...) asparagine). A GAIN-B domain is found at 669-850; that stretch reads PARFLAAKQN…AVLMAHREIY (182 aa). Cystine bridges form between C801/C832 and C820/C834. Residues 801–850 are GPS; sequence CSFWNYSERSMLGYWSTQGCRLVESNKTHTTCACSHLTNFAVLMAHREIY. A helical membrane pass occupies residues 858-878; that stretch reads LLSVITWVGIVISLVCLAICI. The Cytoplasmic segment spans residues 879–892; sequence STFCFLRGLQTDRN. Residues 893–913 form a helical membrane-spanning segment; that stretch reads TIHKNLCINLFLAELLFLVGI. At 914-919 the chain is on the extracellular side; sequence DKTQYE. The chain crosses the membrane as a helical span at residues 920 to 940; sequence IACPIFAGLLHYFFLAAFSWL. Over 941–963 the chain is Cytoplasmic; sequence CLEGVHLYLLLVEVFESEYSRTK. Residues 964–984 traverse the membrane as a helical segment; it reads YYYLGGYCFPALVVGIAAAID. Over 985–1001 the chain is Extracellular; it reads YRSYGTEKACWLRVDNY. A helical transmembrane segment spans residues 1002–1022; it reads FIWSFIGPVSFVIVVNLVFLM. At 1023-1049 the chain is on the cytoplasmic side; the sequence is VTLHKMVRSSSVLKPDSSRLDNIKSWA. Residues 1050 to 1070 form a helical membrane-spanning segment; that stretch reads LGAIALLFLLGLTWAFGLLFI. Residues 1071–1074 are Extracellular-facing; the sequence is NKES. The helical transmembrane segment at 1075 to 1095 threads the bilayer; sequence VVMAYLFTTFNAFQGVFIFVF. At 1096 to 1472 the chain is on the cytoplasmic side; sequence HCALQKKVHK…DGQMQLVTSL (377 aa). R1193 is modified (omega-N-methylarginine). The residue at position 1219 (S1219) is a Phosphoserine. 4 disordered regions span residues 1247 to 1271, 1291 to 1325, 1358 to 1427, and 1449 to 1472; these read FNNS…PRGR, NLRG…GGPG, ESES…SRPP, and YLAA…VTSL. 2 stretches are compositionally biased toward pro residues: residues 1301–1313 and 1406–1418; these read GPPP…PPVP and ALPP…PGPP. S1471 is modified (phosphoserine).

It belongs to the G-protein coupled receptor 2 family. Adhesion G-protein coupled receptor (ADGR) subfamily. As to quaternary structure, forms a heterodimer, consisting of a large extracellular region (p120) non-covalently linked to a seven-transmembrane moiety (p85). Interacts with syntaxin and with proteins of the SHANK family via the PDZ domain. Interacts (via extracellular domain) with FLRT1, FLRT2 and FLRT3 (via extracellular domain). Post-translationally, autoproteolytically cleaved into 2 subunits, an extracellular subunit and a seven-transmembrane subunit. This proteolytic processing takes place early in the biosynthetic pathway, either in the endoplasmic reticulum or in the early compartment of the Golgi apparatus. Brain-specific expression but low levels are also detected in kidney, lung and spleen.

Its subcellular location is the cell membrane. The protein resides in the cell projection. It is found in the axon. It localises to the growth cone. The protein localises to the synapse. Its subcellular location is the presynaptic cell membrane. The protein resides in the synaptosome. In terms of biological role, calcium-independent receptor of high affinity for alpha-latrotoxin, an excitatory neurotoxin present in black widow spider venom which triggers massive exocytosis from neurons and neuroendocrine cells. Receptor for TENM2 that mediates heterophilic synaptic cell-cell contact and postsynaptic specialization. Receptor probably implicated in the regulation of exocytosis. This is Adhesion G protein-coupled receptor L1 from Bos taurus (Bovine).